Reading from the N-terminus, the 217-residue chain is Small ribosomal subunit protein uS3 (217 aa).

The 71-residue stretch at I40–R110 folds into the KH type-2 domain.

The protein belongs to the universal ribosomal protein uS3 family. Part of the 30S ribosomal subunit. Forms a tight complex with proteins S10 and S14.

Functionally, binds the lower part of the 30S subunit head. Binds mRNA in the 70S ribosome, positioning it for translation. The sequence is that of Small ribosomal subunit protein uS3 from Rickettsia felis (strain ATCC VR-1525 / URRWXCal2) (Rickettsia azadi).